The primary structure comprises 128 residues: Ribonuclease P protein component (128 aa).

It belongs to the RnpA family. Consists of a catalytic RNA component (M1 or rnpB) and a protein subunit.

The enzyme catalyses Endonucleolytic cleavage of RNA, removing 5'-extranucleotides from tRNA precursor.. RNaseP catalyzes the removal of the 5'-leader sequence from pre-tRNA to produce the mature 5'-terminus. It can also cleave other RNA substrates such as 4.5S RNA. The protein component plays an auxiliary but essential role in vivo by binding to the 5'-leader sequence and broadening the substrate specificity of the ribozyme. The polypeptide is Ribonuclease P protein component (Chromohalobacter salexigens (strain ATCC BAA-138 / DSM 3043 / CIP 106854 / NCIMB 13768 / 1H11)).